Reading from the N-terminus, the 239-residue chain is tRNA (guanine-N(1)-)-methyltransferase (239 aa).

S-adenosyl-L-methionine-binding positions include Gly-109 and 128–133 (IGDYVL).

The protein belongs to the RNA methyltransferase TrmD family. As to quaternary structure, homodimer.

The protein resides in the cytoplasm. The catalysed reaction is guanosine(37) in tRNA + S-adenosyl-L-methionine = N(1)-methylguanosine(37) in tRNA + S-adenosyl-L-homocysteine + H(+). Specifically methylates guanosine-37 in various tRNAs. This Thermus thermophilus (strain ATCC 27634 / DSM 579 / HB8) protein is tRNA (guanine-N(1)-)-methyltransferase.